The following is a 148-amino-acid chain: Large ribosomal subunit protein cL37 (148 aa).

Residues 1–65 constitute a chloroplast transit peptide; sequence MALLCFNSLP…SSHGRIVVKA (65 aa). At A66 the chain carries N-acetylalanine. The segment at 125 to 148 is disordered; sequence LVRKRKMRKKGRWPPSKMKKNKNV.

This sequence belongs to the chloroplast-specific ribosomal protein cL37 family. In terms of assembly, part of the 50S ribosomal subunit.

The protein localises to the plastid. The protein resides in the chloroplast. The sequence is that of Large ribosomal subunit protein cL37 (PSRP5) from Arabidopsis thaliana (Mouse-ear cress).